Reading from the N-terminus, the 235-residue chain is 2-C-methyl-D-erythritol 4-phosphate cytidylyltransferase (235 aa).

This sequence belongs to the IspD/TarI cytidylyltransferase family. IspD subfamily.

It carries out the reaction 2-C-methyl-D-erythritol 4-phosphate + CTP + H(+) = 4-CDP-2-C-methyl-D-erythritol + diphosphate. It participates in isoprenoid biosynthesis; isopentenyl diphosphate biosynthesis via DXP pathway; isopentenyl diphosphate from 1-deoxy-D-xylulose 5-phosphate: step 2/6. Its function is as follows. Catalyzes the formation of 4-diphosphocytidyl-2-C-methyl-D-erythritol from CTP and 2-C-methyl-D-erythritol 4-phosphate (MEP). The sequence is that of 2-C-methyl-D-erythritol 4-phosphate cytidylyltransferase from Pseudomonas putida (strain ATCC 700007 / DSM 6899 / JCM 31910 / BCRC 17059 / LMG 24140 / F1).